The sequence spans 131 residues: SPbeta prophage-derived uncharacterized protein YoqY (131 aa).

The polypeptide is SPbeta prophage-derived uncharacterized protein YoqY (yoqY) (Bacillus subtilis (strain 168)).